We begin with the raw amino-acid sequence, 493 residues long: Cytoplasmic tRNA 2-thiolation protein 2 (493 aa).

Position 489 is a phosphoserine (Ser-489).

Belongs to the CTU2/NCS2 family. As to quaternary structure, interacts with NCS6 and URM1. May act by forming a heterodimer with NCS6.

Its subcellular location is the cytoplasm. It functions in the pathway tRNA modification; 5-methoxycarbonylmethyl-2-thiouridine-tRNA biosynthesis. Its function is as follows. Plays a central role in 2-thiolation of mcm(5)S(2)U at tRNA wobble positions of tRNA(Lys), tRNA(Glu) and tRNA(Gln). May act by forming a heterodimer with NCS6 that ligates sulfur from thiocarboxylated URM1 onto the uridine of tRNAs at wobble position. Prior mcm(5) tRNA modification by the elongator complex is required for 2-thiolation. May also be involved in protein urmylation and in invasive and pseudohyphal growth. Inhibits replication of Brome mosaic virus. This is Cytoplasmic tRNA 2-thiolation protein 2 from Saccharomyces cerevisiae (strain ATCC 204508 / S288c) (Baker's yeast).